The chain runs to 445 residues: DNA repair protein RadA (445 aa).

The segment at 10–27 (CSNCANISHKWSGQCFDC) adopts a C4-type zinc-finger fold. 90–97 (GEPGIGKS) lines the ATP pocket. Positions 249 to 253 (KNRFG) match the RadA KNRFG motif motif. The lon-protease-like stretch occupies residues 348–445 (EIYLSIAGGL…HLQDLKEIIK (98 aa)).

Belongs to the RecA family. RadA subfamily.

DNA-dependent ATPase involved in processing of recombination intermediates, plays a role in repairing DNA breaks. Stimulates the branch migration of RecA-mediated strand transfer reactions, allowing the 3' invading strand to extend heteroduplex DNA faster. Binds ssDNA in the presence of ADP but not other nucleotides, has ATPase activity that is stimulated by ssDNA and various branched DNA structures, but inhibited by SSB. Does not have RecA's homology-searching function. In Rickettsia typhi (strain ATCC VR-144 / Wilmington), this protein is DNA repair protein RadA.